The sequence spans 44 residues: Metallothionein-4 (44 aa).

Belongs to the metallothionein superfamily. Type 5 family.

Functionally, this protein binds cations of several transition elements. Thought to be involved in metal ion homeostasis. This chain is Metallothionein-4 (MtnD), found in Drosophila melanogaster (Fruit fly).